The sequence spans 195 residues: Imidazoleglycerol-phosphate dehydratase (195 aa).

It belongs to the imidazoleglycerol-phosphate dehydratase family.

Its subcellular location is the cytoplasm. The catalysed reaction is D-erythro-1-(imidazol-4-yl)glycerol 3-phosphate = 3-(imidazol-4-yl)-2-oxopropyl phosphate + H2O. It participates in amino-acid biosynthesis; L-histidine biosynthesis; L-histidine from 5-phospho-alpha-D-ribose 1-diphosphate: step 6/9. This Geobacillus kaustophilus (strain HTA426) protein is Imidazoleglycerol-phosphate dehydratase.